A 337-amino-acid chain; its full sequence is Pseudouridine-5'-phosphate glycosidase (337 aa).

Glutamate 26 functions as the Proton donor in the catalytic mechanism. 2 residues coordinate substrate: lysine 87 and valine 107. Aspartate 139 is a Mn(2+) binding site. Position 141–143 (141–143) interacts with substrate; that stretch reads SAD. The active-site Nucleophile is lysine 160. The segment covering 306–325 has biased composition (low complexity); that stretch reads SSGPQAGAGAPGAEPGPARR. Residues 306 to 337 are disordered; the sequence is SSGPQAGAGAPGAEPGPARRTSPARAPSGEGW.

Belongs to the pseudouridine-5'-phosphate glycosidase family. Homotrimer. The cofactor is Mn(2+).

It catalyses the reaction D-ribose 5-phosphate + uracil = psi-UMP + H2O. Functionally, catalyzes the reversible cleavage of pseudouridine 5'-phosphate (PsiMP) to ribose 5-phosphate and uracil. Functions biologically in the cleavage direction, as part of a pseudouridine degradation pathway. This chain is Pseudouridine-5'-phosphate glycosidase, found in Methylobacterium nodulans (strain LMG 21967 / CNCM I-2342 / ORS 2060).